Reading from the N-terminus, the 427-residue chain is Probable threonylcarbamoyladenosine tRNA methylthiotransferase (427 aa).

One can recognise an MTTase N-terminal domain in the interval 12-118 (MRVYVEGYGC…AGEILKNYVE (107 aa)). Cysteine 21, cysteine 57, cysteine 86, cysteine 155, cysteine 159, and cysteine 162 together coordinate [4Fe-4S] cluster. In terms of domain architecture, Radical SAM core spans 141-370 (LKPSLITPLP…DKLRRELSYL (230 aa)). One can recognise a TRAM domain in the interval 373-427 (KKYIGKAMKVLVLDEGKGYTDNFKVVKFEGGEVGEFRKVKITDAKTFGLKGELIL).

The protein belongs to the methylthiotransferase family. CDKAL1 subfamily. The cofactor is [4Fe-4S] cluster.

The catalysed reaction is N(6)-L-threonylcarbamoyladenosine(37) in tRNA + (sulfur carrier)-SH + AH2 + 2 S-adenosyl-L-methionine = 2-methylsulfanyl-N(6)-L-threonylcarbamoyladenosine(37) in tRNA + (sulfur carrier)-H + 5'-deoxyadenosine + L-methionine + A + S-adenosyl-L-homocysteine + 2 H(+). Functionally, catalyzes the methylthiolation of N6-threonylcarbamoyladenosine (t(6)A), leading to the formation of 2-methylthio-N6-threonylcarbamoyladenosine (ms(2)t(6)A) at position 37 in tRNAs that read codons beginning with adenine. The sequence is that of Probable threonylcarbamoyladenosine tRNA methylthiotransferase from Methanocaldococcus jannaschii (strain ATCC 43067 / DSM 2661 / JAL-1 / JCM 10045 / NBRC 100440) (Methanococcus jannaschii).